The following is a 410-amino-acid chain: 26S proteasome non-ATPase regulatory subunit 6 (410 aa).

Positions Asp-207–Ser-382 constitute a PCI domain.

The protein belongs to the proteasome subunit S10 family. As to expression, expressed in multiple tissues including the intestine, pharynx and hypodermis.

In terms of biological role, acts as a regulatory subunit of the 26S proteasome which is involved in the ATP-dependent degradation of ubiquitinated proteins. This chain is 26S proteasome non-ATPase regulatory subunit 6 (rpn-7), found in Caenorhabditis elegans.